Reading from the N-terminus, the 62-residue chain is Large ribosomal subunit protein uL29 (62 aa).

The protein belongs to the universal ribosomal protein uL29 family.

This chain is Large ribosomal subunit protein uL29, found in Geobacter sulfurreducens (strain ATCC 51573 / DSM 12127 / PCA).